The chain runs to 49 residues: Large ribosomal subunit protein bL33 (49 aa).

The protein belongs to the bacterial ribosomal protein bL33 family.

This chain is Large ribosomal subunit protein bL33, found in Lachnoclostridium phytofermentans (strain ATCC 700394 / DSM 18823 / ISDg) (Clostridium phytofermentans).